A 296-amino-acid polypeptide reads, in one-letter code: Vacuolar histidine transporter YPQ3 (296 aa).

Residues 1–12 (MKLIPIILNAKN) are Vacuolar-facing. Residues 10–76 (AKNLSGMAGS…QNLLPTMIIL (67 aa)) enclose the PQ-loop 1 domain. Residues 13-33 (LSGMAGSISICCWIVVFVPQI) form a helical membrane-spanning segment. At 34 to 44 (YENFRRQSAEG) the chain is on the cytoplasmic side. The chain crosses the membrane as a helical span at residues 45–65 (LSLLFIVLWLLGDIFNVMGAM). Residues 66–68 (MQN) are Vacuolar-facing. A helical membrane pass occupies residues 69–89 (LLPTMIILAAYYTLADLILLI). Over 90 to 163 (QCMWYDKEKK…RTIVVKEREN (74 aa)) the chain is Cytoplasmic. The chain crosses the membrane as a helical span at residues 164–184 (FFNDFLIVSGVLIAGILSWYI). At 185–199 (SYCSGLDNGIPKKKP) the chain is on the vacuolar side. A helical transmembrane segment spans residues 200–220 (AFEQINLPAQILGYLSAILYL). A PQ-loop 2 domain is found at 208 to 270 (AQILGYLSAI…ASWLIGSAGT (63 aa)). Residues 221–238 (GSRIPQIVLNFKRKSCEG) lie on the Cytoplasmic side of the membrane. The helical transmembrane segment at 239–259 (VSFLFFLFACLGNTSFIISVL) threads the bilayer. Over 260-262 (SAS) the chain is Vacuolar. The helical transmembrane segment at 263-283 (WLIGSAGTLLMDFTVFIQFFL) threads the bilayer. Over 284–296 (YAKPKYEKILIDN) the chain is Cytoplasmic.

This sequence belongs to the laat-1 family.

Its subcellular location is the vacuole membrane. The protein resides in the mitochondrion membrane. Amino acid transporter that moves histidine into the vacuole. May also contribute to low affinity arginine import into the vacuole. May function as an amino acid/proton antiporter. This is Vacuolar histidine transporter YPQ3 from Saccharomyces cerevisiae (strain ATCC 204508 / S288c) (Baker's yeast).